The sequence spans 2616 residues: Serine protease ndl (2616 aa).

The first 43 residues, methionine 1–serine 43, serve as a signal peptide directing secretion. Phosphoserine is present on residues serine 215 and serine 220. The stretch at isoleucine 261 to aspartate 269 is one WIID 1 repeat. N-linked (GlcNAc...) asparagine glycosylation is present at asparagine 291. The WIID 2 repeat unit spans residues isoleucine 320–aspartate 328. Asparagine 347 is a glycosylation site (N-linked (GlcNAc...) asparagine). Positions serine 352 to glycine 375 are disordered. N-linked (GlcNAc...) asparagine glycosylation is present at asparagine 379. One copy of the WIID 3 repeat lies at phenylalanine 399 to glutamate 407. Asparagine 417 carries N-linked (GlcNAc...) asparagine glycosylation. WIID repeat units lie at residues phenylalanine 446–glutamate 454 and phenylalanine 477–glutamate 485. 2 N-linked (GlcNAc...) asparagine glycosylation sites follow: asparagine 492 and asparagine 515. One copy of the WIID 6 repeat lies at phenylalanine 528–glutamate 536. Residues serine 537–serine 547 show a composition bias toward low complexity. Residues serine 537 to serine 574 form a disordered region. A compositionally biased stretch (polar residues) spans glutamine 548 to serine 565. 2 positions are modified to phosphoserine: serine 574 and serine 581. Residue asparagine 598 is glycosylated (N-linked (GlcNAc...) asparagine). Serine 794 carries O-linked (Xyl...) (glycosaminoglycan) serine glycosylation. Residues glycine 798–glutamine 817 form a disordered region. Polar residues predominate over residues phenylalanine 804–glutamine 817. Residue asparagine 827 is glycosylated (N-linked (GlcNAc...) asparagine). Residue serine 829 is glycosylated (O-linked (Xyl...) (glycosaminoglycan) serine). N-linked (GlcNAc...) asparagine glycosylation is present at asparagine 861. LDL-receptor class A domains lie at serine 889 to cysteine 929 and phenylalanine 955 to methionine 1006. 3 cysteine pairs are disulfide-bonded: cysteine 891/cysteine 905, cysteine 899/cysteine 918, and cysteine 912/cysteine 927. The LDL-receptor class A 2; truncated domain maps to cysteine 929–glycine 956. Intrachain disulfides connect cysteine 957–cysteine 982, cysteine 964–cysteine 995, and cysteine 989–cysteine 1004. N-linked (GlcNAc...) asparagine glycosylation is present at asparagine 975. The Cell attachment site motif lies at arginine 1031–aspartate 1033. A glycan (N-linked (GlcNAc...) asparagine) is linked at asparagine 1064. Serine 1134 and serine 1136 each carry phosphoserine. The region spanning isoleucine 1145 to threonine 1383 is the Peptidase S1 1 domain. Cysteine 1170 and cysteine 1186 form a disulfide bridge. Residues histidine 1185 and aspartate 1233 each act as charge relay system in the active site. Disulfide bonds link cysteine 1276/cysteine 1338, cysteine 1305/cysteine 1317, cysteine 1328/cysteine 1359, cysteine 1396/cysteine 1408, cysteine 1401/cysteine 1421, and cysteine 1415/cysteine 1430. The active-site Charge relay system is serine 1332. The 39-residue stretch at glutamine 1394–tyrosine 1432 folds into the LDL-receptor class A 4 domain. An N-linked (GlcNAc...) asparagine glycan is attached at asparagine 1445. Disordered stretches follow at residues phenylalanine 1530–asparagine 1557 and proline 1683–lysine 1704. 2 stretches are compositionally biased toward low complexity: residues threonine 1537–asparagine 1557 and proline 1683–threonine 1700. Residues phenylalanine 1713 to cysteine 1743 form the LDL-receptor class A 5; truncated domain. Cystine bridges form between cysteine 1728–cysteine 1745, cysteine 1734–cysteine 1764, cysteine 1758–cysteine 1773, cysteine 1776–cysteine 1789, cysteine 1783–cysteine 1802, and cysteine 1796–cysteine 1811. Residues cysteine 1745 to glutamate 1775 enclose the LDL-receptor class A 6; truncated domain. An LDL-receptor class A 7 domain is found at valine 1774–alanine 1813. N-linked (GlcNAc...) asparagine glycans are attached at residues asparagine 1878, asparagine 1956, and asparagine 2023. Positions leucine 2027–cysteine 2301 constitute a Peptidase S1 2 domain. Cysteines 2055 and 2071 form a disulfide. N-linked (GlcNAc...) asparagine glycans are attached at residues asparagine 2144, asparagine 2173, asparagine 2197, asparagine 2237, and asparagine 2269. Cysteine 2177 and cysteine 2230 are joined by a disulfide. LDL-receptor class A domains follow at residues proline 2308–glutamine 2346, glutamine 2349–cysteine 2389, and cysteine 2419–glycine 2459. 6 disulfides stabilise this stretch: cysteine 2310–cysteine 2320, cysteine 2315–cysteine 2333, cysteine 2327–cysteine 2344, cysteine 2351–cysteine 2364, cysteine 2358–cysteine 2377, and cysteine 2371–cysteine 2387. The region spanning cysteine 2387 to cysteine 2419 is the LDL-receptor class A 10; truncated domain. An N-linked (GlcNAc...) asparagine glycan is attached at asparagine 2420. 3 cysteine pairs are disulfide-bonded: cysteine 2421-cysteine 2435, cysteine 2428-cysteine 2448, and cysteine 2442-cysteine 2457. N-linked (GlcNAc...) asparagine glycans are attached at residues asparagine 2556 and asparagine 2601.

The protein belongs to the peptidase S1 family. Post-translationally, requires cleavage for activation (presumably). In terms of tissue distribution, follicle.

It localises to the secreted. Its subcellular location is the extracellular space. The protein localises to the extracellular matrix. Its function is as follows. Component of the extracellular signaling pathway that establishes the dorsal-ventral pathway of the embryo. A protease cascade involving ndl, gd, snk and ea results in activation of the spz Toll receptor ligand; acts upstream of gd, snk and ea and is required for proteolytic processing of gd. Activation of ea requires activation of the ndl-gd-snk protease cascade and sulfation of a vitelline membrane component by pip. Localized activation of the Toll receptor in the ventral region of the embryo defines cell identities along the dorsal-ventral continuum. The protein is Serine protease ndl of Drosophila melanogaster (Fruit fly).